We begin with the raw amino-acid sequence, 139 residues long: Nucleoside diphosphate kinase (139 aa).

Positions 10, 58, 86, 92, 104, and 114 each coordinate ATP. Catalysis depends on H117, which acts as the Pros-phosphohistidine intermediate.

It belongs to the NDK family. In terms of assembly, homotetramer. It depends on Mg(2+) as a cofactor.

The protein localises to the cytoplasm. It carries out the reaction a 2'-deoxyribonucleoside 5'-diphosphate + ATP = a 2'-deoxyribonucleoside 5'-triphosphate + ADP. The catalysed reaction is a ribonucleoside 5'-diphosphate + ATP = a ribonucleoside 5'-triphosphate + ADP. Its function is as follows. Major role in the synthesis of nucleoside triphosphates other than ATP. The ATP gamma phosphate is transferred to the NDP beta phosphate via a ping-pong mechanism, using a phosphorylated active-site intermediate. This chain is Nucleoside diphosphate kinase, found in Rhodococcus erythropolis (strain PR4 / NBRC 100887).